A 1451-amino-acid polypeptide reads, in one-letter code: Protein clueless (1451 aa).

Disordered stretches follow at residues M1 to A101 and K264 to P286. A compositionally biased stretch (low complexity) spans N9–L53. Basic residues predominate over residues G66–N75. The residue at position 270 (S270) is a Phosphoserine. Residues R424–L666 enclose the Clu domain. 3 disordered regions span residues A722–T775, A961–S1012, and A1413–S1451. The span at G748 to K758 shows a compositional bias: basic and acidic residues. Residues K969–K984 show a composition bias toward basic residues. Residues Q989–S1010 are compositionally biased toward low complexity.

This sequence belongs to the CLU family.

It is found in the cytoplasm. In terms of biological role, mRNA-binding protein involved in proper cytoplasmic distribution of mitochondria. This chain is Protein clueless, found in Drosophila yakuba (Fruit fly).